Here is a 377-residue protein sequence, read N- to C-terminus: Putative glutamate--cysteine ligase 2 (377 aa).

It belongs to the glutamate--cysteine ligase type 2 family. YbdK subfamily.

The catalysed reaction is L-cysteine + L-glutamate + ATP = gamma-L-glutamyl-L-cysteine + ADP + phosphate + H(+). Functionally, ATP-dependent carboxylate-amine ligase which exhibits weak glutamate--cysteine ligase activity. This chain is Putative glutamate--cysteine ligase 2, found in Pseudomonas aeruginosa (strain LESB58).